The primary structure comprises 94 residues: Integration host factor subunit beta (94 aa).

It belongs to the bacterial histone-like protein family. Heterodimer of an alpha and a beta chain.

In terms of biological role, this protein is one of the two subunits of integration host factor, a specific DNA-binding protein that functions in genetic recombination as well as in transcriptional and translational control. In Xanthobacter autotrophicus (strain ATCC BAA-1158 / Py2), this protein is Integration host factor subunit beta.